Here is a 296-residue protein sequence, read N- to C-terminus: Origin of replication complex subunit 6 (296 aa).

Residues proline 212 to asparagine 296 form a disordered region. Acidic residues predominate over residues aspartate 220–aspartate 236. Positions tryptophan 254–glutamine 264 are enriched in polar residues.

It belongs to the ORC6 family. Component of the origin recognition complex (ORC) composed of at least ORC1, ORC2, ORC3, ORC4, ORC5 and ORC6. ORC is regulated in a cell-cycle and development dependent manner. It is sequentially assembled at the exit from anaphase of mitosis and disassembled as cells enter S phase.

Its subcellular location is the nucleus. In terms of biological role, component of the origin recognition complex (ORC) that binds origins of replication. DNA-binding is ATP-dependent. The specific DNA sequences that define origins of replication have not been identified yet. ORC is required to assemble the pre-replication complex necessary to initiate DNA replication. The sequence is that of Origin of replication complex subunit 6 from Oryza sativa subsp. indica (Rice).